A 734-amino-acid chain; its full sequence is Photosystem I P700 chlorophyll a apoprotein A2 (734 aa).

Helical transmembrane passes span 46-69 (IFAS…FHVA), 135-158 (LYTG…LHLQ), 175-199 (LNHH…HVAI), 273-291 (MAHH…GHMY), 330-353 (LHFQ…QHMY), 369-395 (AALY…IFFI), 417-439 (AIIS…LYVH), and 517-535 (FLVH…LILV). [4Fe-4S] cluster contacts are provided by Cys-559 and Cys-568. Helical transmembrane passes span 575 to 596 (AFYL…YWHW) and 643 to 665 (LSVW…MFLI). Positions 654, 662, and 670 each coordinate chlorophyll a. A phylloquinone-binding site is contributed by Trp-671. Residues 707 to 727 (LVGLAHFSVGYIFTYAAFLIA) traverse the membrane as a helical segment.

This sequence belongs to the PsaA/PsaB family. In terms of assembly, the PsaA/B heterodimer binds the P700 chlorophyll special pair and subsequent electron acceptors. PSI consists of a core antenna complex that captures photons, and an electron transfer chain that converts photonic excitation into a charge separation. The eukaryotic PSI reaction center is composed of at least 11 subunits. P700 is a chlorophyll a/chlorophyll a' dimer, A0 is one or more chlorophyll a, A1 is one or both phylloquinones and FX is a shared 4Fe-4S iron-sulfur center. is required as a cofactor.

The protein localises to the plastid. The protein resides in the chloroplast thylakoid membrane. It carries out the reaction reduced [plastocyanin] + hnu + oxidized [2Fe-2S]-[ferredoxin] = oxidized [plastocyanin] + reduced [2Fe-2S]-[ferredoxin]. Functionally, psaA and PsaB bind P700, the primary electron donor of photosystem I (PSI), as well as the electron acceptors A0, A1 and FX. PSI is a plastocyanin-ferredoxin oxidoreductase, converting photonic excitation into a charge separation, which transfers an electron from the donor P700 chlorophyll pair to the spectroscopically characterized acceptors A0, A1, FX, FA and FB in turn. Oxidized P700 is reduced on the lumenal side of the thylakoid membrane by plastocyanin. The chain is Photosystem I P700 chlorophyll a apoprotein A2 from Spinacia oleracea (Spinach).